A 334-amino-acid chain; its full sequence is Holliday junction branch migration complex subunit RuvB (334 aa).

The interval 4-186 is large ATPase domain (RuvB-L); the sequence is ADRLIAPENP…FGITQRLEYY (183 aa). Residues isoleucine 25, arginine 26, glycine 67, lysine 70, threonine 71, threonine 72, 133 to 135, arginine 176, tyrosine 186, and arginine 223 each bind ATP; that span reads EDY. Threonine 71 lines the Mg(2+) pocket. The small ATPAse domain (RuvB-S) stretch occupies residues 187–257; the sequence is KIPDLQNIVQ…TADKALNMLD (71 aa). A head domain (RuvB-H) region spans residues 260 to 334; sequence SKGFDYMDRK…RAYLHFGIEK (75 aa). The DNA site is built by arginine 315 and arginine 320.

Belongs to the RuvB family. In terms of assembly, homohexamer. Forms an RuvA(8)-RuvB(12)-Holliday junction (HJ) complex. HJ DNA is sandwiched between 2 RuvA tetramers; dsDNA enters through RuvA and exits via RuvB. An RuvB hexamer assembles on each DNA strand where it exits the tetramer. Each RuvB hexamer is contacted by two RuvA subunits (via domain III) on 2 adjacent RuvB subunits; this complex drives branch migration. In the full resolvosome a probable DNA-RuvA(4)-RuvB(12)-RuvC(2) complex forms which resolves the HJ.

The protein localises to the cytoplasm. It carries out the reaction ATP + H2O = ADP + phosphate + H(+). Its function is as follows. The RuvA-RuvB-RuvC complex processes Holliday junction (HJ) DNA during genetic recombination and DNA repair, while the RuvA-RuvB complex plays an important role in the rescue of blocked DNA replication forks via replication fork reversal (RFR). RuvA specifically binds to HJ cruciform DNA, conferring on it an open structure. The RuvB hexamer acts as an ATP-dependent pump, pulling dsDNA into and through the RuvAB complex. RuvB forms 2 homohexamers on either side of HJ DNA bound by 1 or 2 RuvA tetramers; 4 subunits per hexamer contact DNA at a time. Coordinated motions by a converter formed by DNA-disengaged RuvB subunits stimulates ATP hydrolysis and nucleotide exchange. Immobilization of the converter enables RuvB to convert the ATP-contained energy into a lever motion, pulling 2 nucleotides of DNA out of the RuvA tetramer per ATP hydrolyzed, thus driving DNA branch migration. The RuvB motors rotate together with the DNA substrate, which together with the progressing nucleotide cycle form the mechanistic basis for DNA recombination by continuous HJ branch migration. Branch migration allows RuvC to scan DNA until it finds its consensus sequence, where it cleaves and resolves cruciform DNA. In Vibrio vulnificus (strain YJ016), this protein is Holliday junction branch migration complex subunit RuvB.